Here is a 303-residue protein sequence, read N- to C-terminus: Bifunctional protein FolD 2 (303 aa).

NADP(+) is bound by residues 169 to 171 (GRS), S194, and I235.

Belongs to the tetrahydrofolate dehydrogenase/cyclohydrolase family. As to quaternary structure, homodimer.

The enzyme catalyses (6R)-5,10-methylene-5,6,7,8-tetrahydrofolate + NADP(+) = (6R)-5,10-methenyltetrahydrofolate + NADPH. It carries out the reaction (6R)-5,10-methenyltetrahydrofolate + H2O = (6R)-10-formyltetrahydrofolate + H(+). Its pathway is one-carbon metabolism; tetrahydrofolate interconversion. In terms of biological role, catalyzes the oxidation of 5,10-methylenetetrahydrofolate to 5,10-methenyltetrahydrofolate and then the hydrolysis of 5,10-methenyltetrahydrofolate to 10-formyltetrahydrofolate. This is Bifunctional protein FolD 2 from Ectopseudomonas mendocina (strain ymp) (Pseudomonas mendocina).